The sequence spans 485 residues: UDP-N-acetylmuramate--L-alanine ligase (485 aa).

120–126 (GSHGKTT) provides a ligand contact to ATP.

This sequence belongs to the MurCDEF family.

The protein resides in the cytoplasm. It carries out the reaction UDP-N-acetyl-alpha-D-muramate + L-alanine + ATP = UDP-N-acetyl-alpha-D-muramoyl-L-alanine + ADP + phosphate + H(+). Its pathway is cell wall biogenesis; peptidoglycan biosynthesis. Cell wall formation. This chain is UDP-N-acetylmuramate--L-alanine ligase, found in Rickettsia conorii (strain ATCC VR-613 / Malish 7).